Reading from the N-terminus, the 156-residue chain is Small ribosomal subunit protein uS7 (156 aa).

The protein belongs to the universal ribosomal protein uS7 family. Part of the 30S ribosomal subunit. Contacts proteins S9 and S11.

One of the primary rRNA binding proteins, it binds directly to 16S rRNA where it nucleates assembly of the head domain of the 30S subunit. Is located at the subunit interface close to the decoding center, probably blocks exit of the E-site tRNA. The protein is Small ribosomal subunit protein uS7 of Nitratiruptor sp. (strain SB155-2).